A 607-amino-acid polypeptide reads, in one-letter code: Elongation factor 4 (607 aa).

In terms of domain architecture, tr-type G spans 11 to 193; that stretch reads EKIRNFSIIA…QIVEKVPAPT (183 aa). Residues 23–28 and 140–143 each bind GTP; these read DHGKST and NKID.

Belongs to the TRAFAC class translation factor GTPase superfamily. Classic translation factor GTPase family. LepA subfamily.

The protein resides in the cell membrane. The enzyme catalyses GTP + H2O = GDP + phosphate + H(+). Functionally, required for accurate and efficient protein synthesis under certain stress conditions. May act as a fidelity factor of the translation reaction, by catalyzing a one-codon backward translocation of tRNAs on improperly translocated ribosomes. Back-translocation proceeds from a post-translocation (POST) complex to a pre-translocation (PRE) complex, thus giving elongation factor G a second chance to translocate the tRNAs correctly. Binds to ribosomes in a GTP-dependent manner. This chain is Elongation factor 4, found in Streptococcus pneumoniae (strain Hungary19A-6).